The following is an 86-amino-acid chain: MSWALKTTDMFLDSSRCTHRTYGDVCAEIHKREREDREAARTAVTDPELPLLCPPDVRSDPASRNPTQQTRGCARSNERQDRVLAP.

An active domain region spans residues 2 to 35; that stretch reads SWALKTTDMFLDSSRCTHRTYGDVCAEIHKRERE. The interval 33-86 is disordered; it reads EREDREAARTAVTDPELPLLCPPDVRSDPASRNPTQQTRGCARSNERQDRVLAP. Positions 62 to 71 are enriched in polar residues; the sequence is ASRNPTQQTR. The span at 76-86 shows a compositional bias: basic and acidic residues; sequence SNERQDRVLAP.

Belongs to the herpesviridae US12 family. As to quaternary structure, interacts with host TAP1 and TAP2; these interactions inhibit the loading of peptides onto MHC class I molecules.

Its subcellular location is the host cytoplasm. The protein resides in the host nucleus. Its function is as follows. Plays a role in the inhibition of host immune response. Binds specifically to transporters associated with antigen processing (TAP), thereby blocking peptide-binding and translocation by TAP as well as subsequent loading of peptides onto MHC class I molecules. Empty MHC I molecules are retained in the endoplasmic reticulum and ultimately directed to proteasomal degradation. In consequence, infected cells are masked for immune recognition by cytotoxic T-lymphocytes. The polypeptide is ICP47 protein (US12) (Human herpesvirus 2 (strain HG52) (HHV-2)).